The chain runs to 152 residues: NADH-quinone oxidoreductase subunit A 2 (152 aa).

Transmembrane regions (helical) follow at residues 8 to 28 (FGKV…GYVS), 63 to 83 (FYVV…LFPW), and 90 to 110 (LGGF…LGLV).

The protein belongs to the complex I subunit 3 family. NDH-1 is composed of 14 different subunits. Subunits NuoA, H, J, K, L, M, N constitute the membrane sector of the complex.

Its subcellular location is the cell inner membrane. It carries out the reaction a quinone + NADH + 5 H(+)(in) = a quinol + NAD(+) + 4 H(+)(out). NDH-1 shuttles electrons from NADH, via FMN and iron-sulfur (Fe-S) centers, to quinones in the respiratory chain. The immediate electron acceptor for the enzyme in this species is believed to be a menaquinone. Couples the redox reaction to proton translocation (for every two electrons transferred, four hydrogen ions are translocated across the cytoplasmic membrane), and thus conserves the redox energy in a proton gradient. This Chloroherpeton thalassium (strain ATCC 35110 / GB-78) protein is NADH-quinone oxidoreductase subunit A 2.